The following is a 553-amino-acid chain: Formate--tetrahydrofolate ligase (553 aa).

62-69 serves as a coordination point for ATP; sequence TPAGEGKS.

This sequence belongs to the formate--tetrahydrofolate ligase family.

The enzyme catalyses (6S)-5,6,7,8-tetrahydrofolate + formate + ATP = (6R)-10-formyltetrahydrofolate + ADP + phosphate. It functions in the pathway one-carbon metabolism; tetrahydrofolate interconversion. The polypeptide is Formate--tetrahydrofolate ligase (Limosilactobacillus reuteri subsp. reuteri (strain JCM 1112) (Lactobacillus reuteri)).